Reading from the N-terminus, the 105-residue chain is Large ribosomal subunit protein eL30 (105 aa).

It belongs to the eukaryotic ribosomal protein eL30 family.

The sequence is that of Large ribosomal subunit protein eL30 (RPL30) from Eremothecium gossypii (strain ATCC 10895 / CBS 109.51 / FGSC 9923 / NRRL Y-1056) (Yeast).